Here is a 1068-residue protein sequence, read N- to C-terminus: Carbamoyl phosphate synthase large chain (1068 aa).

The tract at residues 1-401 (MPLNKDIKKV…AFLKGIRSLE (401 aa)) is carboxyphosphate synthetic domain. R129, R169, G175, G176, K208, V210, E215, G241, I242, H243, Q284, and E298 together coordinate ATP. The ATP-grasp 1 domain maps to 133-327 (RNVMSRINEP…IAKVAAKIAL (195 aa)). Residues Q284, E298, and N300 each contribute to the Mg(2+) site. Residues Q284, E298, and N300 each coordinate Mn(2+). The oligomerization domain stretch occupies residues 402-549 (IGKYSLEHKK…YSTYDVYDEV (148 aa)). Positions 550–932 (EVSKNKKVIV…ALYKGFIGAN (383 aa)) are carbamoyl phosphate synthetic domain. An ATP-grasp 2 domain is found at 674 to 864 (DELLEKLQIS…IVDIATRVML (191 aa)). Positions 710, 749, 751, 755, 780, 781, 782, 783, 823, and 835 each coordinate ATP. Mg(2+) contacts are provided by Q823, E835, and N837. Residues Q823, E835, and N837 each contribute to the Mn(2+) site. In terms of domain architecture, MGS-like spans 933 to 1068 (MSIKKEKGTI…ETLHIFDLSN (136 aa)). Residues 933–1068 (MSIKKEKGTI…ETLHIFDLSN (136 aa)) are allosteric domain.

It belongs to the CarB family. In terms of assembly, composed of two chains; the small (or glutamine) chain promotes the hydrolysis of glutamine to ammonia, which is used by the large (or ammonia) chain to synthesize carbamoyl phosphate. Tetramer of heterodimers (alpha,beta)4. Mg(2+) serves as cofactor. It depends on Mn(2+) as a cofactor.

The enzyme catalyses hydrogencarbonate + L-glutamine + 2 ATP + H2O = carbamoyl phosphate + L-glutamate + 2 ADP + phosphate + 2 H(+). The catalysed reaction is hydrogencarbonate + NH4(+) + 2 ATP = carbamoyl phosphate + 2 ADP + phosphate + 2 H(+). It functions in the pathway amino-acid biosynthesis; L-arginine biosynthesis; carbamoyl phosphate from bicarbonate: step 1/1. It participates in pyrimidine metabolism; UMP biosynthesis via de novo pathway; (S)-dihydroorotate from bicarbonate: step 1/3. In terms of biological role, large subunit of the glutamine-dependent carbamoyl phosphate synthetase (CPSase). CPSase catalyzes the formation of carbamoyl phosphate from the ammonia moiety of glutamine, carbonate, and phosphate donated by ATP, constituting the first step of 2 biosynthetic pathways, one leading to arginine and/or urea and the other to pyrimidine nucleotides. The large subunit (synthetase) binds the substrates ammonia (free or transferred from glutamine from the small subunit), hydrogencarbonate and ATP and carries out an ATP-coupled ligase reaction, activating hydrogencarbonate by forming carboxy phosphate which reacts with ammonia to form carbamoyl phosphate. This is Carbamoyl phosphate synthase large chain from Clostridium botulinum (strain Loch Maree / Type A3).